The primary structure comprises 822 residues: DNA-directed RNA polymerase subunit beta N-terminal section (822 aa).

The segment at 376–408 is disordered; the sequence is ELTEGNPSSKSQTKNKTSASKKSKTLNVANTKG. A compositionally biased stretch (low complexity) spans 383–393; the sequence is SSKSQTKNKTS.

This sequence belongs to the RNA polymerase beta chain family. As to quaternary structure, in plastids the minimal PEP RNA polymerase catalytic core is composed of four subunits: alpha, beta, beta', and beta''. When a (nuclear-encoded) sigma factor is associated with the core the holoenzyme is formed, which can initiate transcription.

It is found in the plastid. The protein resides in the chloroplast. It catalyses the reaction RNA(n) + a ribonucleoside 5'-triphosphate = RNA(n+1) + diphosphate. In terms of biological role, DNA-dependent RNA polymerase catalyzes the transcription of DNA into RNA using the four ribonucleoside triphosphates as substrates. This Chlamydomonas reinhardtii (Chlamydomonas smithii) protein is DNA-directed RNA polymerase subunit beta N-terminal section (rpoB1).